A 66-amino-acid polypeptide reads, in one-letter code: Phylloseptin-B1 (66 aa).

Positions 1 to 22 (MAFLKKSLFLVLFLGLVSLSIC) are cleaved as a signal peptide. A propeptide spanning residues 23-46 (EEEKRETEEKEYDQGEDDKSEEKR) is cleaved from the precursor. L65 carries the post-translational modification Leucine amide.

This sequence belongs to the frog skin active peptide (FSAP) family. Phylloseptin subfamily. In terms of tissue distribution, expressed by the skin glands.

The protein resides in the secreted. Its subcellular location is the target cell membrane. Antimicrobial peptide with activity against only a few strains of Gram-positive bacteria (S.aureus and B.megaterium). Acts in a synergistic effect in combination with Plasticin-B1 at doses that are not active alone. This chain is Phylloseptin-B1, found in Phyllomedusa bicolor (Two-colored leaf frog).